Consider the following 228-residue polypeptide: Ribose-5-phosphate isomerase A (228 aa).

Substrate contacts are provided by residues 32–35 (TGST), 85–88 (DGAD), and 98–101 (KGGG). E107 functions as the Proton acceptor in the catalytic mechanism. Substrate is bound at residue K125.

This sequence belongs to the ribose 5-phosphate isomerase family. In terms of assembly, homodimer.

The enzyme catalyses aldehydo-D-ribose 5-phosphate = D-ribulose 5-phosphate. Its pathway is carbohydrate degradation; pentose phosphate pathway; D-ribose 5-phosphate from D-ribulose 5-phosphate (non-oxidative stage): step 1/1. Catalyzes the reversible conversion of ribose-5-phosphate to ribulose 5-phosphate. The polypeptide is Ribose-5-phosphate isomerase A (Ralstonia pickettii (strain 12J)).